An 804-amino-acid polypeptide reads, in one-letter code: Leucine--tRNA ligase (804 aa).

The 'HIGH' region motif lies at 39 to 50 (PFPSGKGLHVGH). The short motif at 573–577 (KMSKS) is the 'KMSKS' region element. ATP is bound at residue K576.

The protein belongs to the class-I aminoacyl-tRNA synthetase family.

The protein resides in the cytoplasm. The catalysed reaction is tRNA(Leu) + L-leucine + ATP = L-leucyl-tRNA(Leu) + AMP + diphosphate. The polypeptide is Leucine--tRNA ligase (Lactobacillus acidophilus (strain ATCC 700396 / NCK56 / N2 / NCFM)).